The following is a 329-amino-acid chain: Ribosomal RNA small subunit methyltransferase C (329 aa).

This sequence belongs to the methyltransferase superfamily. RsmC family. In terms of assembly, monomer.

It is found in the cytoplasm. It carries out the reaction guanosine(1207) in 16S rRNA + S-adenosyl-L-methionine = N(2)-methylguanosine(1207) in 16S rRNA + S-adenosyl-L-homocysteine + H(+). Functionally, specifically methylates the guanine in position 1207 of 16S rRNA in the 30S particle. This is Ribosomal RNA small subunit methyltransferase C from Actinobacillus pleuropneumoniae serotype 5b (strain L20).